Here is a 104-residue protein sequence, read N- to C-terminus: MSKPSLTLPRIVLHDLWQHKWILLLALLVLSNAVAVVYTSHVSRKLTTEWDQLLQERDRLDIEWRNLLLEEQSQTEHSRITRIASKDLNMSRPLPSEEIVVKVP.

Residues 1 to 20 lie on the Cytoplasmic side of the membrane; sequence MSKPSLTLPRIVLHDLWQHK. A helical membrane pass occupies residues 21–43; the sequence is WILLLALLVLSNAVAVVYTSHVS. Residues 44–104 are Periplasmic-facing; the sequence is RKLTTEWDQL…PSEEIVVKVP (61 aa).

Belongs to the FtsL family. In terms of assembly, part of a complex composed of FtsB, FtsL and FtsQ.

The protein localises to the cell inner membrane. Functionally, essential cell division protein. May link together the upstream cell division proteins, which are predominantly cytoplasmic, with the downstream cell division proteins, which are predominantly periplasmic. The chain is Cell division protein FtsL from Shewanella oneidensis (strain ATCC 700550 / JCM 31522 / CIP 106686 / LMG 19005 / NCIMB 14063 / MR-1).